A 261-amino-acid polypeptide reads, in one-letter code: Orotidine 5'-phosphate decarboxylase (261 aa).

Substrate-binding positions include Asp-34, 56–58 (KTH), 88–97 (DRKFADIGNT), Tyr-214, and Arg-232. Lys-90 functions as the Proton donor in the catalytic mechanism.

It belongs to the OMP decarboxylase family.

It carries out the reaction orotidine 5'-phosphate + H(+) = UMP + CO2. It participates in pyrimidine metabolism; UMP biosynthesis via de novo pathway; UMP from orotate: step 2/2. This Kodamaea ohmeri (Yeast) protein is Orotidine 5'-phosphate decarboxylase (URA3).